A 126-amino-acid polypeptide reads, in one-letter code: Large ribosomal subunit protein bL12 (126 aa).

It belongs to the bacterial ribosomal protein bL12 family. In terms of assembly, homodimer. Part of the ribosomal stalk of the 50S ribosomal subunit. Forms a multimeric L10(L12)X complex, where L10 forms an elongated spine to which 2 to 4 L12 dimers bind in a sequential fashion. Binds GTP-bound translation factors.

In terms of biological role, forms part of the ribosomal stalk which helps the ribosome interact with GTP-bound translation factors. Is thus essential for accurate translation. This Methylobacterium sp. (strain 4-46) protein is Large ribosomal subunit protein bL12.